The primary structure comprises 66 residues: Probable Sec-independent protein translocase protein TatE (66 aa).

The helical transmembrane segment at 1-21 (MEGISITKLLVIAVLIVLLFG) threads the bilayer. Residues 46–66 (ETPAAKKSDGVEAAPRVENKE) are disordered.

The protein belongs to the TatA/E family. TatE subfamily.

Its subcellular location is the cell inner membrane. In terms of biological role, part of the twin-arginine translocation (Tat) system that transports large folded proteins containing a characteristic twin-arginine motif in their signal peptide across membranes. TatE shares overlapping functions with TatA. This is Probable Sec-independent protein translocase protein TatE from Edwardsiella ictaluri (strain 93-146).